The chain runs to 101 residues: Small ribosomal subunit protein uS14 (101 aa).

Belongs to the universal ribosomal protein uS14 family. Part of the 30S ribosomal subunit. Contacts proteins S3 and S10.

Functionally, binds 16S rRNA, required for the assembly of 30S particles and may also be responsible for determining the conformation of the 16S rRNA at the A site. In Bartonella henselae (strain ATCC 49882 / DSM 28221 / CCUG 30454 / Houston 1) (Rochalimaea henselae), this protein is Small ribosomal subunit protein uS14.